We begin with the raw amino-acid sequence, 467 residues long: UDP-N-acetylmuramoylalanine--D-glutamate ligase (467 aa).

Position 121 to 127 (121 to 127) interacts with ATP; the sequence is GTNGKST.

Belongs to the MurCDEF family.

The protein localises to the cytoplasm. The catalysed reaction is UDP-N-acetyl-alpha-D-muramoyl-L-alanine + D-glutamate + ATP = UDP-N-acetyl-alpha-D-muramoyl-L-alanyl-D-glutamate + ADP + phosphate + H(+). It functions in the pathway cell wall biogenesis; peptidoglycan biosynthesis. Functionally, cell wall formation. Catalyzes the addition of glutamate to the nucleotide precursor UDP-N-acetylmuramoyl-L-alanine (UMA). The polypeptide is UDP-N-acetylmuramoylalanine--D-glutamate ligase (Brucella abortus (strain 2308)).